A 270-amino-acid chain; its full sequence is 2-epi-5-epi-valiolone 7-phosphate 2-epimerase (270 aa).

Active-site proton donor/acceptor residues include glutamate 143 and glutamate 236.

This sequence belongs to the hyi family.

It catalyses the reaction 2-epi-5-epi-valiolone 7-phosphate = 5-epi-valiolone 7-phosphate. Involved in the biosynthesis of the alpha-glucosidase inhibitor acarbose. Catalyzes the 2-epimerisation of 2-epi-5-epivaliolone 7-phosphate to yield 5-epi-valiolone 7-phosphate. This Actinoplanes sp. (strain ATCC 31044 / CBS 674.73 / SE50/110) protein is 2-epi-5-epi-valiolone 7-phosphate 2-epimerase (acbO).